The sequence spans 27 residues: iraD leader peptide (27 aa).

Functionally, a short protein whose stop codon overlaps with the start codon of downstream iraD; its mRNA secondary structure is predicted to fold and sequester the Shine-Dalgarno sequence of iraD. When this protein is expressed the downstream iraD is also expressed due to ribosomal coupling. This is iraD leader peptide (idlP) from Escherichia coli (strain K12).